We begin with the raw amino-acid sequence, 148 residues long: Probable TtuB-protein conjugate cleaving protease (148 aa).

Residues histidine 22–leucine 148 enclose the MPN domain. Glutamate 47 acts as the Proton donor/acceptor in catalysis. Positions 101, 103, and 114 each coordinate Zn(2+). A JAMM motif motif is present at residues histidine 101 to aspartate 114.

Belongs to the peptidase M67B family. It depends on Zn(2+) as a cofactor.

Probable metalloprotease that cleaves the ubiquitin-like modifier protein TtuB from protein conjugates, hydrolyzing the isopeptide bond between a lysine residue of the target protein and the C-terminal glycine of the modifier protein. Does not seem to work for all the TtuB conjugates. The chain is Probable TtuB-protein conjugate cleaving protease from Thermus thermophilus (strain ATCC BAA-163 / DSM 7039 / HB27).